The chain runs to 478 residues: Zinc metalloproteinase/disintegrin (478 aa).

An N-terminal signal peptide occupies residues 1-20 (MIQVLLVTICLAAFPYQGSS). The propeptide occupies 21-188 (IILESGNVND…PIKKVSQLNL (168 aa)). In terms of domain architecture, Peptidase M12B spans 194–391 (RHVDIVVVVD…QNPQCILNKP (198 aa)). A disulfide bridge connects residues C207 and C248. N-linked (GlcNAc...) (complex) asparagine glycosylation is present at N279. Disulfide bonds link C305/C386, C345/C370, and C347/C353. H330 lines the Zn(2+) pocket. E331 is a catalytic residue. H334 and H340 together coordinate Zn(2+). N369 carries N-linked (GlcNAc...) (complex) asparagine glycosylation. A propeptide spanning residues 392–407 (LRTVSIPVSGNEHLEA) is cleaved from the precursor. Positions 397 to 478 (IPVSGNEHLE…ADCPRYHSHA (82 aa)) constitute a Disintegrin domain. Intrachain disulfides connect C411–C426, C413–C421, C420–C443, C434–C440, C439–C464, and C452–C471. A Cell attachment site motif is present at residues 456–458 (RGD). The propeptide occupies 476-478 (SHA).

It belongs to the venom metalloproteinase (M12B) family. P-II subfamily. P-IIa sub-subfamily. In terms of assembly, monomeric (disintegrin). Zn(2+) serves as cofactor. Glycans are composed of 4 GlcNAc, 3 Man, 2 Gal, 2 NeuAC and 1 Fuc residue. Expressed by the venom gland.

The protein resides in the secreted. Functionally, impairs hemostasis in the envenomed animal. Inhibits platelet aggregation induced by ADP, thrombin, platelet-activating factor and collagen. Acts by inhibiting fibrinogen interaction with platelet receptors alpha-IIb/beta-3 (ITGA2B/ITGB3). This is Zinc metalloproteinase/disintegrin from Calloselasma rhodostoma (Malayan pit viper).